Reading from the N-terminus, the 267-residue chain is Short chain dehydrogenase claC (267 aa).

NADP(+) contacts are provided by isoleucine 27, aspartate 73, asparagine 100, and arginine 133. Residues serine 149 and serine 150 each act as proton donor in the active site. Positions 164, 168, and 199 each coordinate NADP(+). Catalysis depends on tyrosine 164, which acts as the Proton acceptor. The active-site Lowers pKa of active site Tyr is the lysine 168.

The protein belongs to the short-chain dehydrogenases/reductases (SDR) family.

The protein operates within pigment biosynthesis. Functionally, non-reducing polyketide synthase; part of the gene cluster that mediates the biosynthesis of the bianthraquinone cladofulvin, a conidial pigment not required for virulence but that plays a role in fitness and resistance to environmental stresses including UV light and low-temperature stress. The pathway begins with the synthesis of atrochrysone thioester by the polyketide synthase (PKS) claG. The atrochrysone carboxyl ACP thioesterase claF then breaks the thioester bond and releases the atrochrysone carboxylic acid from claG. This compound is decarboxylated by claH to yield emodin, which is further converted to chrysophanol hydroquinone by the reductase claC and the dehydratase claB. The cytochrome monooxygenase P450 claM then catalyzes the dimerization of nataloe-emodin to cladofulvin. This Passalora fulva (Tomato leaf mold) protein is Short chain dehydrogenase claC.